A 101-amino-acid chain; its full sequence is Large ribosomal subunit protein uL23 (101 aa).

It belongs to the universal ribosomal protein uL23 family. In terms of assembly, part of the 50S ribosomal subunit. Contacts protein L29, and trigger factor when it is bound to the ribosome.

One of the early assembly proteins it binds 23S rRNA. One of the proteins that surrounds the polypeptide exit tunnel on the outside of the ribosome. Forms the main docking site for trigger factor binding to the ribosome. This is Large ribosomal subunit protein uL23 from Wigglesworthia glossinidia brevipalpis.